Consider the following 334-residue polypeptide: Glyceraldehyde-3-phosphate dehydrogenase (334 aa).

Residues 12-13, Asp-34, and Arg-79 contribute to the NAD(+) site; that span reads RI. Residues 150 to 152, Thr-181, 210 to 211, and Arg-233 contribute to the D-glyceraldehyde 3-phosphate site; these read SCT and TG. Cys-151 serves as the catalytic Nucleophile. Asn-315 is a binding site for NAD(+).

This sequence belongs to the glyceraldehyde-3-phosphate dehydrogenase family. As to quaternary structure, homotetramer.

Its subcellular location is the cytoplasm. It carries out the reaction D-glyceraldehyde 3-phosphate + phosphate + NAD(+) = (2R)-3-phospho-glyceroyl phosphate + NADH + H(+). It participates in carbohydrate degradation; glycolysis; pyruvate from D-glyceraldehyde 3-phosphate: step 1/5. This is Glyceraldehyde-3-phosphate dehydrogenase (GPD) from Wickerhamomyces ciferrii (strain ATCC 14091 / BCRC 22168 / CBS 111 / JCM 3599 / NBRC 0793 / NRRL Y-1031 F-60-10) (Yeast).